Reading from the N-terminus, the 299-residue chain is Biotin transporter (299 aa).

The next 10 helical transmembrane spans lie at 2–22, 26–46, 56–76, 81–101, 110–130, 137–157, 172–192, 202–222, 233–253, and 256–276; these read ALLIITTILWAFSFSFYGEYL, VDSYFAVLVRVGLAALVFLPF, TVGLYMLVGAMQLGVMYMLSF, YLTVSELLLFTVLTPLYITLI, LRWGYAFSALLAVIGAGIIRY, FWTGLLLVQLSNITFAIGMVG, AFAWFYLGAFLVAVIAWFLLG, LQWGILVFLGVVASGIGYFMW, TLGIMNNMHVPAGLLVNLAIW, and QPHWPTFITGALVILASLWVH. EamA domains follow at residues 3-128 and 139-274; these read LLII…AGII and TGLL…ASLW.

The protein belongs to the drug/metabolite transporter (DMT) superfamily. 10 TMS drug/metabolite exporter (DME) (TC 2.A.7.3) family.

The protein localises to the cell inner membrane. The enzyme catalyses biotin(in) = biotin(out). Functionally, uptake of biotin. This Escherichia coli O157:H7 protein is Biotin transporter.